Reading from the N-terminus, the 158-residue chain is 6,7-dimethyl-8-ribityllumazine synthase (158 aa).

5-amino-6-(D-ribitylamino)uracil is bound by residues tryptophan 27, 58 to 60 (SFE), and 81 to 83 (VII). 86-87 (GT) is a (2S)-2-hydroxy-3-oxobutyl phosphate binding site. Histidine 89 functions as the Proton donor in the catalytic mechanism. Phenylalanine 114 serves as a coordination point for 5-amino-6-(D-ribitylamino)uracil. Arginine 128 contributes to the (2S)-2-hydroxy-3-oxobutyl phosphate binding site.

This sequence belongs to the DMRL synthase family.

It carries out the reaction (2S)-2-hydroxy-3-oxobutyl phosphate + 5-amino-6-(D-ribitylamino)uracil = 6,7-dimethyl-8-(1-D-ribityl)lumazine + phosphate + 2 H2O + H(+). It participates in cofactor biosynthesis; riboflavin biosynthesis; riboflavin from 2-hydroxy-3-oxobutyl phosphate and 5-amino-6-(D-ribitylamino)uracil: step 1/2. Functionally, catalyzes the formation of 6,7-dimethyl-8-ribityllumazine by condensation of 5-amino-6-(D-ribitylamino)uracil with 3,4-dihydroxy-2-butanone 4-phosphate. This is the penultimate step in the biosynthesis of riboflavin. This is 6,7-dimethyl-8-ribityllumazine synthase from Leifsonia xyli subsp. xyli (strain CTCB07).